We begin with the raw amino-acid sequence, 1004 residues long: Putative helicase MOV-10 (1004 aa).

K148 is modified (N6-acetyllysine). T254 carries the post-translational modification Phosphothreonine. Position 433 is a phosphoserine (S433). ATP is bound at residue 525–532; it reads GPPGTGKT. Positions 646 to 649 match the DEAG box motif; it reads DEAG. The tract at residues 922–966 is interaction with AGO2 and APOBEC3G; sequence NPLLLGHDPDWKTFLEFCKENGGYTGCPFPAKLDLQQGQDLLQGL. The disordered stretch occupies residues 966 to 1004; sequence LSKLSPSTSGPRRHQNLPQEREGEGGLPLQVEPEWRNEL. Phosphoserine is present on S970.

Belongs to the DNA2/NAM7 helicase family. SDE3 subfamily. As to quaternary structure, interacts with DICER1, AGO2, TARBP2, EIF6 and RPL7A (60S ribosome subunit); they form a large RNA-induced silencing complex (RISC). Interacts with APOBEC3G in an RNA-dependent manner. Interacts with TRIM71 (via NHL repeats) in an RNA-dependent manner. Interacts with both protein products of LIRE1, ORF1p and ORF2p. Interacts with TUT4 and, to a lesser extent, TUT7; the interactions are RNA-dependent. Interacts with AGO2, TNRC6B and UPF1; the interactions are direct and RNA-dependent. Interacts with FMR1; this interaction is direct, occurs in an RNA-dependent manner on polysomes and induces association of MOV10 with RNAs. Interacts with SHFL; the interaction increases in presence of RNA. Interacts with DHX34; the interaction is RNA-independent. Interacts with RBM46. Post-translationally, ubiquitinated by the DCX(DCAF12) complex that specifically recognizes the glutamate-leucine (Glu-Leu) degron at the C-terminus, leading to its degradation.

It is found in the cytoplasm. Its subcellular location is the P-body. The protein localises to the nucleus. The protein resides in the cytoplasmic ribonucleoprotein granule. It localises to the stress granule. It carries out the reaction ATP + H2O = ADP + phosphate + H(+). Functionally, 5' to 3' RNA helicase that is involved in a number of cellular roles ranging from mRNA metabolism and translation, modulation of viral infectivity, inhibition of retrotransposition, or regulation of synaptic transmission. Plays an important role in innate antiviral immunity by promoting type I interferon production. Mechanistically, specifically uses IKKepsilon/IKBKE as the mediator kinase for IRF3 activation. Contributes to UPF1 mRNA target degradation by translocation along 3' UTRs. Required for microRNA (miRNA)-mediated gene silencing by the RNA-induced silencing complex (RISC). Required for both miRNA-mediated translational repression and miRNA-mediated cleavage of complementary mRNAs by RISC. In cooperation with FMR1, regulates miRNA-mediated translational repression by AGO2. Restricts retrotransposition of long interspersed element-1 (LINE-1) in cooperation with TUT4 and TUT7 counteracting the RNA chaperonne activity of L1RE1. Facilitates LINE-1 uridylation by TUT4 and TUT7. Required for embryonic viability and for normal central nervous system development and function. Plays two critical roles in early brain development: suppresses retroelements in the nucleus by directly inhibiting cDNA synthesis, while regulates cytoskeletal mRNAs to influence neurite outgrowth in the cytosol. May function as a messenger ribonucleoprotein (mRNP) clearance factor. This chain is Putative helicase MOV-10 (Mov10), found in Mus musculus (Mouse).